Here is a 512-residue protein sequence, read N- to C-terminus: Choline-sulfatase (512 aa).

Ca(2+) is bound by residues aspartate 14, glutamine 15, and cysteine 54. Cysteine 54 (nucleophile) is an active-site residue. 3-oxoalanine (Cys) is present on cysteine 54. Histidine 104 is a catalytic residue. The Ca(2+) site is built by aspartate 296 and histidine 297.

This sequence belongs to the sulfatase family. It depends on Ca(2+) as a cofactor. In terms of processing, the conversion to 3-oxoalanine (also known as C-formylglycine, FGly), of a serine or cysteine residue in prokaryotes and of a cysteine residue in eukaryotes, is critical for catalytic activity.

The catalysed reaction is choline sulfate + H2O = choline + sulfate + H(+). It functions in the pathway amine and polyamine biosynthesis; choline biosynthesis; choline from choline sulfate: step 1/1. Converts choline-O-sulfate into choline. In Rhizobium meliloti (strain 1021) (Ensifer meliloti), this protein is Choline-sulfatase (betC).